Consider the following 328-residue polypeptide: Methionyl-tRNA formyltransferase (328 aa).

121–124 (SLLP) serves as a coordination point for (6S)-5,6,7,8-tetrahydrofolate.

It belongs to the Fmt family.

The enzyme catalyses L-methionyl-tRNA(fMet) + (6R)-10-formyltetrahydrofolate = N-formyl-L-methionyl-tRNA(fMet) + (6S)-5,6,7,8-tetrahydrofolate + H(+). In terms of biological role, attaches a formyl group to the free amino group of methionyl-tRNA(fMet). The formyl group appears to play a dual role in the initiator identity of N-formylmethionyl-tRNA by promoting its recognition by IF2 and preventing the misappropriation of this tRNA by the elongation apparatus. The polypeptide is Methionyl-tRNA formyltransferase (Paraburkholderia phytofirmans (strain DSM 17436 / LMG 22146 / PsJN) (Burkholderia phytofirmans)).